A 254-amino-acid polypeptide reads, in one-letter code: Leucyl/phenylalanyl-tRNA--protein transferase (254 aa).

This sequence belongs to the L/F-transferase family.

It localises to the cytoplasm. It catalyses the reaction N-terminal L-lysyl-[protein] + L-leucyl-tRNA(Leu) = N-terminal L-leucyl-L-lysyl-[protein] + tRNA(Leu) + H(+). It carries out the reaction N-terminal L-arginyl-[protein] + L-leucyl-tRNA(Leu) = N-terminal L-leucyl-L-arginyl-[protein] + tRNA(Leu) + H(+). The enzyme catalyses L-phenylalanyl-tRNA(Phe) + an N-terminal L-alpha-aminoacyl-[protein] = an N-terminal L-phenylalanyl-L-alpha-aminoacyl-[protein] + tRNA(Phe). Functions in the N-end rule pathway of protein degradation where it conjugates Leu, Phe and, less efficiently, Met from aminoacyl-tRNAs to the N-termini of proteins containing an N-terminal arginine or lysine. In Burkholderia cenocepacia (strain HI2424), this protein is Leucyl/phenylalanyl-tRNA--protein transferase.